The sequence spans 389 residues: Flap endonuclease 1 (389 aa).

The N-domain stretch occupies residues 1–105 (MGIKGLNKLL…GELAKRKERR (105 aa)). Asp34 serves as a coordination point for Mg(2+). Residues Arg47 and Arg71 each coordinate DNA. Mg(2+) contacts are provided by Asp87, Glu170, Glu172, Asp191, and Asp193. An I-domain region spans residues 134-265 (DVTRFEKRTV…QTALKLMKEH (132 aa)). Residue Glu170 coordinates DNA. DNA is bound by residues Gly243 and Asp245. Mg(2+) is bound at residue Asp245. An interaction with PCNA region spans residues 351–359 (PQARLDGFF). Residues 360 to 389 (KVMPKEGGEKRKADDKKTKGKKPATKKAKK) form a disordered region. Residues 362 to 376 (MPKEGGEKRKADDKK) show a composition bias toward basic and acidic residues. Positions 377 to 389 (TKGKKPATKKAKK) are enriched in basic residues.

The protein belongs to the XPG/RAD2 endonuclease family. FEN1 subfamily. In terms of assembly, interacts with PCNA. Three molecules of FEN1 bind to one PCNA trimer with each molecule binding to one PCNA monomer. PCNA stimulates the nuclease activity without altering cleavage specificity. Mg(2+) is required as a cofactor. Post-translationally, phosphorylated. Phosphorylation upon DNA damage induces relocalization to the nuclear plasma.

The protein resides in the nucleus. The protein localises to the nucleolus. It is found in the nucleoplasm. Its subcellular location is the mitochondrion. Structure-specific nuclease with 5'-flap endonuclease and 5'-3' exonuclease activities involved in DNA replication and repair. During DNA replication, cleaves the 5'-overhanging flap structure that is generated by displacement synthesis when DNA polymerase encounters the 5'-end of a downstream Okazaki fragment. It enters the flap from the 5'-end and then tracks to cleave the flap base, leaving a nick for ligation. Also involved in the long patch base excision repair (LP-BER) pathway, by cleaving within the apurinic/apyrimidinic (AP) site-terminated flap. Acts as a genome stabilization factor that prevents flaps from equilibrating into structures that lead to duplications and deletions. Also possesses 5'-3' exonuclease activity on nicked or gapped double-stranded DNA, and exhibits RNase H activity. Also involved in replication and repair of rDNA and in repairing mitochondrial DNA. This chain is Flap endonuclease 1, found in Yarrowia lipolytica (strain CLIB 122 / E 150) (Yeast).